The chain runs to 306 residues: MESTQSIGIRELLEAGVHFGHQAKRWNPKMKRYIFAERAGVHIIDLDQTLDLLERALNFIRGVAEAGQDVLFVGTKKQAQITIAEQAIRCGQPYVAERYIGGLLTNFRTIRPRIEYFKQLSREVEETPEEERSGKEWFARLREYQKLRRNFAGITEMERLPGAVYVVDPKREELLVREANRLRIPVVALTDTNCDPDVIDYVIPGNDDAIRSISLITRLIADAVIEGRGEESAAEERPVPPAVEEAQMVEEGRVPAGGEEQPGEPEAEAFEEAAGEPEDSTEEEAAEEQAASQAAPVGEGDESEER.

The span at 229 to 238 (GEESAAEERP) shows a compositional bias: basic and acidic residues. The segment at 229–306 (GEESAAEERP…VGEGDESEER (78 aa)) is disordered. Residues 261–287 (QPGEPEAEAFEEAAGEPEDSTEEEAAE) show a composition bias toward acidic residues.

It belongs to the universal ribosomal protein uS2 family.

The sequence is that of Small ribosomal subunit protein uS2 from Rubrobacter xylanophilus (strain DSM 9941 / JCM 11954 / NBRC 16129 / PRD-1).